The sequence spans 148 residues: Lysozyme C (148 aa).

The first 18 residues, 1 to 18 (MKALIILGLVLLSVTVQG), serve as a signal peptide directing secretion. The C-type lysozyme domain maps to 19-148 (KIFERCELAR…VSQYVKGCGV (130 aa)). Intrachain disulfides connect Cys24-Cys146, Cys48-Cys134, Cys83-Cys99, and Cys95-Cys113. Residues Glu53 and Asp71 contribute to the active site.

This sequence belongs to the glycosyl hydrolase 22 family. As to quaternary structure, monomer.

It localises to the secreted. The enzyme catalyses Hydrolysis of (1-&gt;4)-beta-linkages between N-acetylmuramic acid and N-acetyl-D-glucosamine residues in a peptidoglycan and between N-acetyl-D-glucosamine residues in chitodextrins.. Lysozymes have primarily a bacteriolytic function; those in tissues and body fluids are associated with the monocyte-macrophage system and enhance the activity of immunoagents. The sequence is that of Lysozyme C (LYZ) from Nasalis larvatus (Proboscis monkey).